A 556-amino-acid polypeptide reads, in one-letter code: Arginine--tRNA ligase (556 aa).

Positions 132–142 (ANPTGDLHLGH) match the 'HIGH' region motif.

This sequence belongs to the class-I aminoacyl-tRNA synthetase family. As to quaternary structure, monomer.

Its subcellular location is the cytoplasm. The catalysed reaction is tRNA(Arg) + L-arginine + ATP = L-arginyl-tRNA(Arg) + AMP + diphosphate. This chain is Arginine--tRNA ligase, found in Listeria welshimeri serovar 6b (strain ATCC 35897 / DSM 20650 / CCUG 15529 / CIP 8149 / NCTC 11857 / SLCC 5334 / V8).